Consider the following 672-residue polypeptide: NADPH-Fe(3+) oxidoreductase subunit beta (672 aa).

The [4Fe-4S] cluster site is built by Cys-203, Cys-207, Cys-211, and Cys-215. 254–283 contributes to the FAD binding site; the sequence is KKVAIVGAGPAGLACAYYLALEGYPCTIYE. 388 to 421 serves as a coordination point for NADP(+); it reads GKKVVVVGGGNTAIDCVRVALREGAEESTLLYRR. An FAD-binding site is contributed by 552 to 562; that stretch reads TDLEGVFAGGD.

As to quaternary structure, heterotetramer with 2 alpha subunits. [4Fe-4S] cluster is required as a cofactor. The cofactor is FAD.

It is found in the cell membrane. Functionally, probably involved in acetate metabolism and not in the reduction of Fe(3+) chelates. May serve as a major route for NADP regeneration. In Geobacter sulfurreducens (strain DL-1 / KN400), this protein is NADPH-Fe(3+) oxidoreductase subunit beta (sfrB).